A 396-amino-acid polypeptide reads, in one-letter code: Phosphoglycerate kinase (396 aa).

Residues 21 to 23, R36, 59 to 62, R118, and R151 each bind substrate; these read DLN and HFGR. Residues K201, E323, and 353–356 contribute to the ATP site; that span reads GGDT.

This sequence belongs to the phosphoglycerate kinase family. Monomer.

The protein localises to the cytoplasm. It carries out the reaction (2R)-3-phosphoglycerate + ATP = (2R)-3-phospho-glyceroyl phosphate + ADP. Its pathway is carbohydrate degradation; glycolysis; pyruvate from D-glyceraldehyde 3-phosphate: step 2/5. The chain is Phosphoglycerate kinase from Brucella abortus biovar 1 (strain 9-941).